The following is a 182-amino-acid chain: Large ribosomal subunit protein bL25 (182 aa).

This sequence belongs to the bacterial ribosomal protein bL25 family. CTC subfamily. As to quaternary structure, part of the 50S ribosomal subunit; part of the 5S rRNA/L5/L18/L25 subcomplex. Contacts the 5S rRNA. Binds to the 5S rRNA independently of L5 and L18.

This is one of the proteins that binds to the 5S RNA in the ribosome where it forms part of the central protuberance. The chain is Large ribosomal subunit protein bL25 from Borrelia garinii subsp. bavariensis (strain ATCC BAA-2496 / DSM 23469 / PBi) (Borreliella bavariensis).